A 691-amino-acid polypeptide reads, in one-letter code: Protein phosphatase 1 regulatory subunit 37 (691 aa).

The disordered stretch occupies residues 1-43 (MEIAPQEAPPVPGADGDIEEAPAEAGSPSPASPPADGRLKAAA). S50 and S56 each carry phosphoserine. LRR repeat units lie at residues 220–240 (SLAV…MLLA), 248–269 (NLRE…AQLG), 277–297 (SLQI…AYIC), 306–326 (GLVT…AFLG), and 334–354 (SLET…RHLK). The interval 460-662 (EREEKEQPPQ…PEVKGGSCGL (203 aa)) is disordered. The span at 468 to 481 (PQLSASMPETTATE) shows a compositional bias: polar residues. Over residues 505-523 (SDSDSDSDGEEEEEEEGER) the composition is skewed to acidic residues. At S561 the chain carries Phosphoserine. Pro residues-rich tracts occupy residues 584 to 605 (PASP…PSLP) and 620 to 634 (PQPP…PPLP).

Belongs to the PPP1R37 family. As to quaternary structure, interacts with PPP1CA.

In terms of biological role, inhibits phosphatase activity of protein phosphatase 1 (PP1) complexes. In Homo sapiens (Human), this protein is Protein phosphatase 1 regulatory subunit 37 (PPP1R37).